We begin with the raw amino-acid sequence, 235 residues long: Lipoprotein signal peptidase (235 aa).

The segment at 1–23 (MTDETSGPAEPVTDAPGDAESPA) is disordered. Helical transmembrane passes span 31–51 (LLLTVAAVVLFLDVVTKVLAV), 84–104 (GYTWVLTLVATGVVIGIIWMG), and 108–128 (VSPWWALGLGLILGGATGNLV). Active-site residues include Asp-144 and Asp-158. A helical membrane pass occupies residues 156–176 (VADPSVVGGAILLVALSLFGF). A disordered region spans residues 185–235 (RPGEDAEPSAGASDSTPEAPAADGPDKPAGPVGPEDAAEESKTVGHQAEPS). The span at 201-218 (PEAPAADGPDKPAGPVGP) shows a compositional bias: low complexity.

Belongs to the peptidase A8 family.

The protein resides in the cell membrane. It carries out the reaction Release of signal peptides from bacterial membrane prolipoproteins. Hydrolyzes -Xaa-Yaa-Zaa-|-(S,diacylglyceryl)Cys-, in which Xaa is hydrophobic (preferably Leu), and Yaa (Ala or Ser) and Zaa (Gly or Ala) have small, neutral side chains.. It functions in the pathway protein modification; lipoprotein biosynthesis (signal peptide cleavage). This protein specifically catalyzes the removal of signal peptides from prolipoproteins. The chain is Lipoprotein signal peptidase from Mycolicibacterium smegmatis (strain ATCC 700084 / mc(2)155) (Mycobacterium smegmatis).